A 497-amino-acid chain; its full sequence is GDP-fucose protein O-fucosyltransferase 4 (497 aa).

Residues 1–6 lie on the Cytoplasmic side of the membrane; the sequence is MACRRR. The helical; Signal-anchor for type II membrane protein transmembrane segment at 7–27 threads the bilayer; the sequence is LLPCAGLGLFGVLCWVWVSFA. The Lumenal portion of the chain corresponds to 28–497; it reads SFPDDQLPLE…ITERRARGKH (470 aa). The N-linked (GlcNAc...) asparagine glycan is linked to N169. A disulfide bridge links C392 with C395. Positions 406–427 are disordered; that stretch reads RAHRKDPERNPPPLPKMASNSH. An N-linked (GlcNAc...) asparagine glycan is attached at N474.

It belongs to the glycosyltransferase 10 family.

Its subcellular location is the endoplasmic reticulum membrane. It catalyses the reaction L-threonyl-[protein] + GDP-beta-L-fucose = 3-O-(alpha-L-fucosyl)-L-threonyl-[protein] + GDP + H(+). It carries out the reaction L-seryl-[protein] + GDP-beta-L-fucose = 3-O-(alpha-L-fucosyl)-L-seryl-[protein] + GDP + H(+). The protein operates within protein modification; protein glycosylation. Protein O-fucosyltransferase that specifically catalyzes O-fucosylation of serine or threonine residues in EMI domains of target proteins. Attaches fucose through an O-glycosidic linkage. O-fucosylation of EMI domain-containing proteins may be required for facilitating protein folding and secretion. This Oryzias latipes (Japanese rice fish) protein is GDP-fucose protein O-fucosyltransferase 4 (fut11).